A 341-amino-acid polypeptide reads, in one-letter code: Protein RecA, plasmid (341 aa).

ATP is bound at residue 80-87; the sequence is GAESSGKT.

The protein belongs to the RecA family.

It is found in the cytoplasm. Its function is as follows. Can catalyze the hydrolysis of ATP in the presence of single-stranded DNA, the ATP-dependent uptake of single-stranded DNA by duplex DNA, and the ATP-dependent hybridization of homologous single-stranded DNAs. It interacts with LexA causing its activation and leading to its autocatalytic cleavage. This chain is Protein RecA, plasmid, found in Lactococcus lactis subsp. lactis (Streptococcus lactis).